The sequence spans 161 residues: uncharacterized protein (161 aa).

This is an uncharacterized protein from Acidianus convivator (ATV).